Consider the following 309-residue polypeptide: HPr kinase/phosphorylase (309 aa).

Active-site residues include His-138 and Lys-159. Residue 153-160 participates in ATP binding; it reads GDSGIGKS. A Mg(2+)-binding site is contributed by Ser-160. The active-site Proton acceptor; for phosphorylation activity. Proton donor; for dephosphorylation activity is Asp-177. The important for the catalytic mechanism of both phosphorylation and dephosphorylation stretch occupies residues 201–210; that stretch reads LEIRGVGIID. Residue Glu-202 participates in Mg(2+) binding. Arg-243 is an active-site residue. Residues 264–269 form an important for the catalytic mechanism of dephosphorylation region; the sequence is PVKTGR.

This sequence belongs to the HPrK/P family. In terms of assembly, homohexamer. The cofactor is Mg(2+).

It carries out the reaction [HPr protein]-L-serine + ATP = [HPr protein]-O-phospho-L-serine + ADP + H(+). The catalysed reaction is [HPr protein]-O-phospho-L-serine + phosphate + H(+) = [HPr protein]-L-serine + diphosphate. Functionally, catalyzes the ATP- as well as the pyrophosphate-dependent phosphorylation of a specific serine residue in HPr, a phosphocarrier protein of the phosphoenolpyruvate-dependent sugar phosphotransferase system (PTS). HprK/P also catalyzes the pyrophosphate-producing, inorganic phosphate-dependent dephosphorylation (phosphorolysis) of seryl-phosphorylated HPr (P-Ser-HPr). The two antagonistic activities of HprK/P are regulated by several intracellular metabolites, which change their concentration in response to the absence or presence of rapidly metabolisable carbon sources (glucose, fructose, etc.) in the growth medium. Therefore, by controlling the phosphorylation state of HPr, HPrK/P is a sensor enzyme that plays a major role in the regulation of carbon metabolism and sugar transport: it mediates carbon catabolite repression (CCR), and regulates PTS-catalyzed carbohydrate uptake and inducer exclusion. The sequence is that of HPr kinase/phosphorylase from Streptococcus thermophilus (strain ATCC BAA-491 / LMD-9).